The primary structure comprises 122 residues: AMVNPAAYLQQQQLISSSPLDVVNAPTYLQQQLLQQIIPALTQLAVANPAAYLQQLLPFNQLTVSNSAAYLQQRQQLLNPLVVANPLVAAFLQQQQLLPYNQFSLMNPALSWQQPIVGGAIF.

Belongs to the zein family.

Zeins are major seed storage proteins. The sequence is that of Zein-alpha B49 from Zea mays (Maize).